Consider the following 522-residue polypeptide: Transactivator/viroplasmin protein (522 aa).

Residues K487 to G500 show a composition bias toward basic and acidic residues. Residues K487–D522 form a disordered region.

The protein belongs to the caulimoviridae viroplasmin family.

The protein resides in the host cytoplasm. Functionally, enhances the ribosomal termination-reinitiation event leading to the translation of major open reading frames on the polycistronic viral RNAs. The protein is Transactivator/viroplasmin protein of Arabidopsis thaliana (Mouse-ear cress).